We begin with the raw amino-acid sequence, 921 residues long: Eukaryotic translation initiation factor 3 subunit A (921 aa).

Residues 319 to 493 (FKFYASQLVL…GVVSFMEDPF (175 aa)) form the PCI domain. The interval 497-524 (GGSTATNADDEQRNDDGYEETHVEEEPE) is disordered. Over residues 506–517 (DEQRNDDGYEET) the composition is skewed to basic and acidic residues. 2 coiled-coil regions span residues 562-647 (ARNE…NEKT) and 693-868 (ERMS…IKRN). The segment covering 818–865 (AAKEHDDRQRMLQDRLTKERKERERVNKEKDEAARKQREIEEAVERTI) has biased composition (basic and acidic residues). Residues 818–921 (AAKEHDDRQR…KMKLRRAGRA (104 aa)) are disordered. Over residues 873–890 (PAPPVRSAPPARAAPPPR) the composition is skewed to pro residues. Basic and acidic residues predominate over residues 903–913 (PEKKLTYAEKM).

It belongs to the eIF-3 subunit A family. As to quaternary structure, component of the eukaryotic translation initiation factor 3 (eIF-3) complex.

The protein resides in the cytoplasm. Functionally, RNA-binding component of the eukaryotic translation initiation factor 3 (eIF-3) complex, which is involved in protein synthesis of a specialized repertoire of mRNAs and, together with other initiation factors, stimulates binding of mRNA and methionyl-tRNAi to the 40S ribosome. The eIF-3 complex specifically targets and initiates translation of a subset of mRNAs involved in cell proliferation. The polypeptide is Eukaryotic translation initiation factor 3 subunit A (Eremothecium gossypii (strain ATCC 10895 / CBS 109.51 / FGSC 9923 / NRRL Y-1056) (Yeast)).